The sequence spans 146 residues: Vascular endothelial growth factor A (146 aa).

Positions 1–26 (MNFLLSWVHWSLALLLYLHHAKWSQA) are cleaved as a signal peptide. Intrachain disulfides connect Cys-51/Cys-93, Cys-82/Cys-127, and Cys-86/Cys-129. The N-linked (GlcNAc...) asparagine glycan is linked to Asn-100.

It belongs to the PDGF/VEGF growth factor family. As to quaternary structure, homodimer; disulfide-linked. Also found as heterodimer with PGF. Interacts with NRP1. Interacts with isoform 2 of BSG. Interacts with CD82; this interaction inhibits VEGFA-mediated signaling pathway.

Growth factor active in angiogenesis, vasculogenesis and endothelial cell growth. Induces endothelial cell proliferation, promotes cell migration, inhibits apoptosis and induces permeabilization of blood vessels. Binds to the FLT1/VEGFR1 and KDR/VEGFR2 receptors, heparan sulfate and heparin. Binding to NRP1 receptor initiates a signaling pathway needed for motor neuron axon guidance and cell body migration, including for the caudal migration of facial motor neurons from rhombomere 4 to rhombomere 6 during embryonic development. Also binds the DEAR/FBXW7-AS1 receptor. This Ovis aries (Sheep) protein is Vascular endothelial growth factor A (VEGFA).